Here is a 523-residue protein sequence, read N- to C-terminus: Apoptosis inhibitor 5-B (523 aa).

Positions 1–360 are ARM-like and Heat-like helical repeats; sequence MPTVEELYRN…HQLGRKLPDF (360 aa). Residues 446 to 523 are disordered; it reads VQKTDSGQKR…RGNRSRGRIY (78 aa). The Nuclear localization signal motif lies at 454-475; the sequence is KRMSDETSSTSPPKKPVVGPKR. Residues 502 to 515 show a composition bias toward gly residues; sequence GFQGGRGRGWGGRG.

The protein belongs to the API5 family. In terms of assembly, monomer.

It localises to the nucleus. Functionally, may be an antiapoptotic factor. In Xenopus laevis (African clawed frog), this protein is Apoptosis inhibitor 5-B (api5-b).